The chain runs to 439 residues: Dihydroorotase (439 aa).

Zn(2+)-binding residues include His73 and His75. Residues 75–77 (HLR) and Asn107 contribute to the substrate site. Zn(2+) contacts are provided by Asp165, His192, and His245. Position 291 (Asn291) interacts with substrate. Asp318 provides a ligand contact to Zn(2+). The active site involves Asp318. Position 322 (His322) interacts with substrate.

The protein belongs to the metallo-dependent hydrolases superfamily. DHOase family. Class I DHOase subfamily. The cofactor is Zn(2+).

It carries out the reaction (S)-dihydroorotate + H2O = N-carbamoyl-L-aspartate + H(+). The protein operates within pyrimidine metabolism; UMP biosynthesis via de novo pathway; (S)-dihydroorotate from bicarbonate: step 3/3. In terms of biological role, catalyzes the reversible cyclization of carbamoyl aspartate to dihydroorotate. The polypeptide is Dihydroorotase (Syntrophobacter fumaroxidans (strain DSM 10017 / MPOB)).